We begin with the raw amino-acid sequence, 201 residues long: Holliday junction branch migration complex subunit RuvA (201 aa).

The tract at residues 1 to 64 (MIGRLRGTLA…EDAHLLYGFA (64 aa)) is domain I. The interval 65-143 (EKRERELFRE…AWENMPTIAP (79 aa)) is domain II. The flexible linker stretch occupies residues 144–152 (LVMEPRASA). A domain III region spans residues 153–201 (TVSSAEADAVSALIALGFKPQEASRAVAAVPGEDLSSEEMIRQALKGMV).

It belongs to the RuvA family. In terms of assembly, homotetramer. Forms an RuvA(8)-RuvB(12)-Holliday junction (HJ) complex. HJ DNA is sandwiched between 2 RuvA tetramers; dsDNA enters through RuvA and exits via RuvB. An RuvB hexamer assembles on each DNA strand where it exits the tetramer. Each RuvB hexamer is contacted by two RuvA subunits (via domain III) on 2 adjacent RuvB subunits; this complex drives branch migration. In the full resolvosome a probable DNA-RuvA(4)-RuvB(12)-RuvC(2) complex forms which resolves the HJ.

Its subcellular location is the cytoplasm. Its function is as follows. The RuvA-RuvB-RuvC complex processes Holliday junction (HJ) DNA during genetic recombination and DNA repair, while the RuvA-RuvB complex plays an important role in the rescue of blocked DNA replication forks via replication fork reversal (RFR). RuvA specifically binds to HJ cruciform DNA, conferring on it an open structure. The RuvB hexamer acts as an ATP-dependent pump, pulling dsDNA into and through the RuvAB complex. HJ branch migration allows RuvC to scan DNA until it finds its consensus sequence, where it cleaves and resolves the cruciform DNA. In Pseudomonas aeruginosa (strain LESB58), this protein is Holliday junction branch migration complex subunit RuvA.